Reading from the N-terminus, the 1193-residue chain is DNA-directed RNA polymerase subunit beta (1193 aa).

Positions 1152–1161 are enriched in acidic residues; that stretch reads IEMRDLEDDE. Positions 1152-1193 are disordered; that stretch reads IEMRDLEDDEETKKADGLALSNDEDAADLAPVDLERDAVTKE. Residues 1184 to 1193 show a composition bias toward basic and acidic residues; it reads DLERDAVTKE.

The protein belongs to the RNA polymerase beta chain family. In terms of assembly, the RNAP catalytic core consists of 2 alpha, 1 beta, 1 beta' and 1 omega subunit. When a sigma factor is associated with the core the holoenzyme is formed, which can initiate transcription.

It catalyses the reaction RNA(n) + a ribonucleoside 5'-triphosphate = RNA(n+1) + diphosphate. DNA-dependent RNA polymerase catalyzes the transcription of DNA into RNA using the four ribonucleoside triphosphates as substrates. The protein is DNA-directed RNA polymerase subunit beta of Bacillus pumilus (strain SAFR-032).